Here is a 145-residue protein sequence, read N- to C-terminus: Large ribosomal subunit protein cL37 (145 aa).

A chloroplast-targeting transit peptide spans 1–63; sequence MALLCFNSFT…PRKNSIFIAS (63 aa). Residues 125–145 are disordered; the sequence is KRRLRKKGNWPPSKMKKLEGV.

It belongs to the chloroplast-specific ribosomal protein cL37 family. Part of the 50S ribosomal subunit.

It is found in the plastid. The protein resides in the chloroplast. The polypeptide is Large ribosomal subunit protein cL37 (PSRP5) (Pisum sativum (Garden pea)).